The primary structure comprises 292 residues: High-affinity heme uptake system protein IsdE (292 aa).

The first 19 residues, 1–19 (MRIIKYLTILVISVVILTS), serve as a signal peptide directing secretion. Cysteine 20 is lipidated: N-palmitoyl cysteine. Cysteine 20 carries S-diacylglycerol cysteine lipidation. The Fe/B12 periplasmic-binding domain maps to 35 to 291 (RIVPTTVALT…QLYDLFYKDK (257 aa)). Heme is bound by residues valine 41, alanine 42, serine 60, tyrosine 61, methionine 78, and histidine 229.

This sequence belongs to the bacterial solute-binding protein 8 family. The cofactor is heme b.

It is found in the cell membrane. Functionally, involved in heme (porphyrin) scavenging. Binds Fe(2+) and Fe(3+) heme but the largest fraction is Fe(2+) heme. Functions as a high-affinity heme binding protein and probably has a role in relaying heme-iron from cell wall-anchored isd proteins receptors to the probable permease IsdF. The chain is High-affinity heme uptake system protein IsdE (isdE) from Staphylococcus aureus (strain Mu3 / ATCC 700698).